The primary structure comprises 219 residues: Transcriptional activator protein rep2 (219 aa).

A zinc finger lies at 177–197 (CSKCNTTFNHSTALMMHEATC).

In terms of biological role, transcriptional activator which interacts with the mcb binding subunit complex formed by res2 and cdc10. Rep2 is required for the mitotic cell cycle start. The polypeptide is Transcriptional activator protein rep2 (rep2) (Schizosaccharomyces pombe (strain 972 / ATCC 24843) (Fission yeast)).